Reading from the N-terminus, the 342-residue chain is Ketol-acid reductoisomerase (NADP(+)) (342 aa).

The region spanning 2-182 (AKIYYDDDAD…GGLRAGGIET (181 aa)) is the KARI N-terminal Rossmann domain. Residues 25-28 (YGSQ), R48, S51, S53, and 83-86 (DQNQ) each bind NADP(+). The active site involves H108. An NADP(+)-binding site is contributed by G134. The region spanning 183-328 (SFREETETDL…KELRKMYSWL (146 aa)) is the KARI C-terminal knotted domain. Mg(2+) is bound by residues D191, E195, E227, and E231. Residue S252 participates in substrate binding.

It belongs to the ketol-acid reductoisomerase family. It depends on Mg(2+) as a cofactor.

The catalysed reaction is (2R)-2,3-dihydroxy-3-methylbutanoate + NADP(+) = (2S)-2-acetolactate + NADPH + H(+). The enzyme catalyses (2R,3R)-2,3-dihydroxy-3-methylpentanoate + NADP(+) = (S)-2-ethyl-2-hydroxy-3-oxobutanoate + NADPH + H(+). Its pathway is amino-acid biosynthesis; L-isoleucine biosynthesis; L-isoleucine from 2-oxobutanoate: step 2/4. It participates in amino-acid biosynthesis; L-valine biosynthesis; L-valine from pyruvate: step 2/4. Involved in the biosynthesis of branched-chain amino acids (BCAA). Catalyzes an alkyl-migration followed by a ketol-acid reduction of (S)-2-acetolactate (S2AL) to yield (R)-2,3-dihydroxy-isovalerate. In the isomerase reaction, S2AL is rearranged via a Mg-dependent methyl migration to produce 3-hydroxy-3-methyl-2-ketobutyrate (HMKB). In the reductase reaction, this 2-ketoacid undergoes a metal-dependent reduction by NADPH to yield (R)-2,3-dihydroxy-isovalerate. The sequence is that of Ketol-acid reductoisomerase (NADP(+)) from Cutibacterium acnes (strain DSM 16379 / KPA171202) (Propionibacterium acnes).